The primary structure comprises 217 residues: MMKQKLSLYFVMGSIDCTKDPLAVLDEAIKGGITMFQFREKGKGALTGIEKYRLAEKLLERCRMYNIPFIVNDDVDLALALQADGVHVGQEDEVAERVRDRIGDKYLGVSVHNLNEVKKALAACADYVGLGPIFPTVSKEDAKQACGLTMIEHIRAHEKRVPLVAIGGITEQTAKQVIEAGADGIAVISAICRAEHIYEQTKRLYEMVMRAKQKGDR.

Residues 37 to 41 (QFREK) and N72 each bind 4-amino-2-methyl-5-(diphosphooxymethyl)pyrimidine. Mg(2+) is bound by residues D73 and D92. S110 provides a ligand contact to 4-amino-2-methyl-5-(diphosphooxymethyl)pyrimidine. 136–138 (TVS) is a binding site for 2-[(2R,5Z)-2-carboxy-4-methylthiazol-5(2H)-ylidene]ethyl phosphate. Residue K139 coordinates 4-amino-2-methyl-5-(diphosphooxymethyl)pyrimidine. Residues G168 and 188-189 (IS) each bind 2-[(2R,5Z)-2-carboxy-4-methylthiazol-5(2H)-ylidene]ethyl phosphate.

Belongs to the thiamine-phosphate synthase family. Mg(2+) is required as a cofactor.

The enzyme catalyses 2-[(2R,5Z)-2-carboxy-4-methylthiazol-5(2H)-ylidene]ethyl phosphate + 4-amino-2-methyl-5-(diphosphooxymethyl)pyrimidine + 2 H(+) = thiamine phosphate + CO2 + diphosphate. It catalyses the reaction 2-(2-carboxy-4-methylthiazol-5-yl)ethyl phosphate + 4-amino-2-methyl-5-(diphosphooxymethyl)pyrimidine + 2 H(+) = thiamine phosphate + CO2 + diphosphate. The catalysed reaction is 4-methyl-5-(2-phosphooxyethyl)-thiazole + 4-amino-2-methyl-5-(diphosphooxymethyl)pyrimidine + H(+) = thiamine phosphate + diphosphate. Its pathway is cofactor biosynthesis; thiamine diphosphate biosynthesis; thiamine phosphate from 4-amino-2-methyl-5-diphosphomethylpyrimidine and 4-methyl-5-(2-phosphoethyl)-thiazole: step 1/1. Functionally, condenses 4-methyl-5-(beta-hydroxyethyl)thiazole monophosphate (THZ-P) and 2-methyl-4-amino-5-hydroxymethyl pyrimidine pyrophosphate (HMP-PP) to form thiamine monophosphate (TMP). The protein is Thiamine-phosphate synthase of Anoxybacillus flavithermus (strain DSM 21510 / WK1).